The chain runs to 434 residues: Cytochrome P450 144 (434 aa).

Residues Asp-124 and His-128 each coordinate substrate. 4 residues coordinate heme: Arg-132, Arg-326, His-383, and Cys-385.

The protein belongs to the cytochrome P450 family. Monomer. Requires heme as cofactor.

This is Cytochrome P450 144 (cyp144) from Mycobacterium tuberculosis (strain CDC 1551 / Oshkosh).